The primary structure comprises 2120 residues: Alpha-tectorin (2120 aa).

Residues 1 to 24 (MNTRSLLSAWAALLVVTVRHRAHA) form the signal peptide. 6 N-linked (GlcNAc...) asparagine glycosylation sites follow: Asn-34, Asn-215, Asn-258, Asn-277, Asn-445, and Asn-496. In terms of domain architecture, NIDO spans 98–252 (PFCGDVANGI…GRWAFKIDGR (155 aa)). One can recognise a VWFC domain in the interval 260–312 (SLRGQFLHQGEIFWENSNCSTKCRCLDFNNEIFCQEMLAPFETVEPKIKFFQC). Positions 317-490 (TACVVFGDPH…RVPHPERKCS (174 aa)) constitute a VWFD 1 domain. 2 disulfides stabilise this stretch: Cys-319-Cys-451 and Cys-341-Cys-489. The TIL 1 domain occupies 578–620 (PGHSHYSGCASGCPATCSDLTAPLRCTAPCPEGCECDDGHVLS). 8 N-linked (GlcNAc...) asparagine glycosylation sites follow: Asn-666, Asn-792, Asn-822, Asn-834, Asn-877, Asn-899, Asn-907, and Asn-928. The VWFD 2 domain occupies 690–865 (GLCSVGQNQV…SWTTFDEICN (176 aa)). Cys-692 and Cys-828 form a disulfide bridge. Residues 963-1013 (CPENSHFEECMSCVETCETLATGCCMDTCTEGCQCDEGFALRSPCVPRGEC) form the TIL 2 domain. N-linked (GlcNAc...) asparagine glycans are attached at residues Asn-1025, Asn-1041, Asn-1207, and Asn-1337. The VWFD 3 domain maps to 1066-1250 (ASCIVSGYGH…SWAKRDTFCR (185 aa)). 2 cysteine pairs are disulfide-bonded: Cys-1068–Cys-1213 and Cys-1090–Cys-1249. The region spanning 1345 to 1398 (CPPNSHYESCVSLCQPRCAAIRLKSDCGHYCVEGCQCDPGYVLNGKSCILPQNC) is the TIL 3 domain. A VWFD 4 domain is found at 1458-1633 (SFCLAAGGGV…KTNGMQKSCN (176 aa)). 7 disulfides stabilise this stretch: Cys-1460–Cys-1594, Cys-1482–Cys-1632, Cys-1684–Cys-1742, Cys-1708–Cys-1751, Cys-1753–Cys-1785, Cys-1773–Cys-1865, and Cys-1804–Cys-1824. Asn-1511, Asn-1537, Asn-1723, Asn-1739, Asn-1761, Asn-1818, Asn-1831, Asn-1847, Asn-1887, and Asn-1906 each carry an N-linked (GlcNAc...) asparagine glycan. Residues 1772-2026 (TCKAAQMEVS…YSCKINCPQH (255 aa)) enclose the ZP domain. Disulfide bonds link Cys-1947–Cys-2007, Cys-1968–Cys-2023, and Cys-2012–Cys-2019. Asn-2058 carries the GPI-anchor amidated asparagine lipid modification. Residues 2059 to 2120 (GGCEQICTSQ…LWAALHDPTS (62 aa)) constitute a propeptide, removed in mature form.

As to quaternary structure, may form homomeric filament after self-association or heteromeric filament after association with beta-tectorin. At least 3 products of tectorin seem to exist: HMM, MMM and LMM. They may be generated by active processing or the result of proteolysis occurring between intrachain disulfide bonds. Post-translationally, the presence of a hydrophobic C-terminus preceded by a potential cleavage site strongly suggests that tectorins are synthesized as glycosylphosphatidylinositol-linked, membrane-bound precursors. Tectorins are targeted to the apical surface of the inner ear epithelia by the lipid and proteolytically released into the extracellular compartment. In terms of tissue distribution, expressed in the inner ear.

It is found in the cell membrane. The protein resides in the secreted. It localises to the extracellular space. Its subcellular location is the extracellular matrix. In terms of biological role, one of the major non-collagenous components of the tectorial membrane. The tectorial membrane is an extracellular matrix of the inner ear that covers the neuroepithelium of the cochlea and contacts the stereocilia bundles of specialized sensory hair cells. Sound induces movement of these hair cells relative to the tectorial membrane, deflects the stereocilia and leads to fluctuations in hair-cell membrane potential, transducing sound into electrical signals. The polypeptide is Alpha-tectorin (TECTA) (Gallus gallus (Chicken)).